The sequence spans 171 residues: Nucleoside-triphosphatase THEP1 (171 aa).

Residues 8 to 15 (GPPGAGKS) and 95 to 102 (VYLIDEIG) each bind ATP.

This sequence belongs to the THEP1 NTPase family.

It carries out the reaction a ribonucleoside 5'-triphosphate + H2O = a ribonucleoside 5'-diphosphate + phosphate + H(+). In terms of biological role, has nucleotide phosphatase activity towards ATP, GTP, CTP, TTP and UTP. May hydrolyze nucleoside diphosphates with lower efficiency. The protein is Nucleoside-triphosphatase THEP1 of Ignicoccus hospitalis (strain KIN4/I / DSM 18386 / JCM 14125).